Reading from the N-terminus, the 262-residue chain is Small ribosomal subunit protein uS3 (262 aa).

The KH type-2 domain occupies 39–107 (VREFLKKKLK…PVHVNIEEIR (69 aa)). A disordered region spans residues 211 to 262 (NDAPVVEEPQEERRKRPGRPEGRRREGEGRPAGQRRGAGAGARRGTDAKTGE). The segment covering 221–239 (EERRKRPGRPEGRRREGEG) has biased composition (basic and acidic residues).

The protein belongs to the universal ribosomal protein uS3 family. Part of the 30S ribosomal subunit. Forms a tight complex with proteins S10 and S14.

Binds the lower part of the 30S subunit head. Binds mRNA in the 70S ribosome, positioning it for translation. The chain is Small ribosomal subunit protein uS3 from Ralstonia pickettii (strain 12J).